Reading from the N-terminus, the 164-residue chain is FMN reductase (NADH) RutF (164 aa).

It belongs to the non-flavoprotein flavin reductase family. RutF subfamily.

The catalysed reaction is FMNH2 + NAD(+) = FMN + NADH + 2 H(+). Functionally, catalyzes the reduction of FMN to FMNH2 which is used to reduce pyrimidine by RutA via the Rut pathway. This is FMN reductase (NADH) RutF from Escherichia coli O45:K1 (strain S88 / ExPEC).